Consider the following 161-residue polypeptide: SsrA-binding protein (161 aa).

The segment at Met1 to Ser23 is disordered.

This sequence belongs to the SmpB family.

It localises to the cytoplasm. Functionally, required for rescue of stalled ribosomes mediated by trans-translation. Binds to transfer-messenger RNA (tmRNA), required for stable association of tmRNA with ribosomes. tmRNA and SmpB together mimic tRNA shape, replacing the anticodon stem-loop with SmpB. tmRNA is encoded by the ssrA gene; the 2 termini fold to resemble tRNA(Ala) and it encodes a 'tag peptide', a short internal open reading frame. During trans-translation Ala-aminoacylated tmRNA acts like a tRNA, entering the A-site of stalled ribosomes, displacing the stalled mRNA. The ribosome then switches to translate the ORF on the tmRNA; the nascent peptide is terminated with the 'tag peptide' encoded by the tmRNA and targeted for degradation. The ribosome is freed to recommence translation, which seems to be the essential function of trans-translation. The polypeptide is SsrA-binding protein (Hyphomonas neptunium (strain ATCC 15444)).